The following is a 503-amino-acid chain: Probable cytosol aminopeptidase (503 aa).

Mn(2+) contacts are provided by Lys271 and Asp276. Residue Lys283 is part of the active site. Residues Asp294, Asp353, and Glu355 each coordinate Mn(2+). Arg357 is a catalytic residue.

The protein belongs to the peptidase M17 family. Mn(2+) is required as a cofactor.

The protein localises to the cytoplasm. It catalyses the reaction Release of an N-terminal amino acid, Xaa-|-Yaa-, in which Xaa is preferably Leu, but may be other amino acids including Pro although not Arg or Lys, and Yaa may be Pro. Amino acid amides and methyl esters are also readily hydrolyzed, but rates on arylamides are exceedingly low.. The catalysed reaction is Release of an N-terminal amino acid, preferentially leucine, but not glutamic or aspartic acids.. Presumably involved in the processing and regular turnover of intracellular proteins. Catalyzes the removal of unsubstituted N-terminal amino acids from various peptides. This is Probable cytosol aminopeptidase from Chlorobium phaeobacteroides (strain DSM 266 / SMG 266 / 2430).